The primary structure comprises 332 residues: Arabinogalactan endo-beta-1,4-galactanase (332 aa).

Asparagine 111 is a glycosylation site (N-linked (GlcNAc...) asparagine). Glutamate 135 acts as the Proton donor in catalysis. Glutamate 245 functions as the Nucleophile in the catalytic mechanism.

The protein belongs to the glycosyl hydrolase 53 family.

It catalyses the reaction The enzyme specifically hydrolyzes (1-&gt;4)-beta-D-galactosidic linkages in type I arabinogalactans.. The sequence is that of Arabinogalactan endo-beta-1,4-galactanase from Humicola insolens (Soft-rot fungus).